We begin with the raw amino-acid sequence, 81 residues long: Metallocarboxypeptidase inhibitor (81 aa).

Residues 1-15 (MFLLVFLCCLHLVIS) form the signal peptide. Intrachain disulfides connect Cys-25-Cys-48, Cys-32-Cys-76, Cys-33-Cys-57, and Cys-36-Cys-72.

Tightly binding, competitive inhibitor of different types of pancreatic-like carboxypeptidases. Inhibits human CPA4. The chain is Metallocarboxypeptidase inhibitor from Hirudo medicinalis (Medicinal leech).